A 386-amino-acid chain; its full sequence is Succinate--CoA ligase [ADP-forming] subunit beta (386 aa).

Residues 9-244 (KELFANYGVP…LDEEEPLEVE (236 aa)) enclose the ATP-grasp domain. Residues lysine 46, 53–55 (GRG), glutamate 99, leucine 102, and glutamate 107 contribute to the ATP site. Mg(2+) contacts are provided by asparagine 199 and aspartate 213. Residues asparagine 264 and 321–323 (GIL) each bind substrate.

It belongs to the succinate/malate CoA ligase beta subunit family. As to quaternary structure, heterotetramer of two alpha and two beta subunits. The cofactor is Mg(2+).

The catalysed reaction is succinate + ATP + CoA = succinyl-CoA + ADP + phosphate. It catalyses the reaction GTP + succinate + CoA = succinyl-CoA + GDP + phosphate. It participates in carbohydrate metabolism; tricarboxylic acid cycle; succinate from succinyl-CoA (ligase route): step 1/1. Functionally, succinyl-CoA synthetase functions in the citric acid cycle (TCA), coupling the hydrolysis of succinyl-CoA to the synthesis of either ATP or GTP and thus represents the only step of substrate-level phosphorylation in the TCA. The beta subunit provides nucleotide specificity of the enzyme and binds the substrate succinate, while the binding sites for coenzyme A and phosphate are found in the alpha subunit. The protein is Succinate--CoA ligase [ADP-forming] subunit beta of Desulfatibacillum aliphaticivorans.